A 180-amino-acid polypeptide reads, in one-letter code: ATP-dependent protease subunit HslV (180 aa).

The active site involves threonine 8. Positions 165, 168, and 171 each coordinate Na(+).

It belongs to the peptidase T1B family. HslV subfamily. A double ring-shaped homohexamer of HslV is capped on each side by a ring-shaped HslU homohexamer. The assembly of the HslU/HslV complex is dependent on binding of ATP.

It is found in the cytoplasm. It catalyses the reaction ATP-dependent cleavage of peptide bonds with broad specificity.. Its activity is regulated as follows. Allosterically activated by HslU binding. Functionally, protease subunit of a proteasome-like degradation complex believed to be a general protein degrading machinery. The polypeptide is ATP-dependent protease subunit HslV (Halalkalibacterium halodurans (strain ATCC BAA-125 / DSM 18197 / FERM 7344 / JCM 9153 / C-125) (Bacillus halodurans)).